The primary structure comprises 590 residues: Guanylate-binding protein 1 (590 aa).

The tract at residues Met1–Cys309 is GTPase domain (Globular). Residues Thr35 to Lys276 enclose the GB1/RHD3-type G domain. GTP-binding positions include Gly45–Ser52, Leu67–Ser69, and Asp97–Leu101. Position 156 is a phosphoserine (Ser156). Cys587 is modified (cysteine methyl ester). Cys587 is lipidated: S-farnesyl cysteine. Thr588 is subject to Phosphothreonine. A propeptide spans Thr588–Ser590 (removed in mature form).

The protein belongs to the TRAFAC class dynamin-like GTPase superfamily. GB1/RHD3 GTPase family. GB1 subfamily. Homodimer; homodimerization occurs upon GTP-binding and is required for the second hydrolysis step from GDP to GMP. Undergoes conformational changes and oligomerization upon GTP-binding and hydrolysis. Heterodimer with other family members, including GBP2, GBP3, GBP4 and GBP5. Dimerization regulates subcellular location to membranous structures. Interacts with SQSTM1. Interacts (when phosphorylated) with 14-3-3 protein sigma (SFN); leading to GBP1 retention in the cytosol and inactivation. Isoprenylation is required for proper subcellular location. In terms of processing, phosphorylated at Ser-156 by PIM1 in absence of infection, inhibits GBP1: phosphorylation promotes interaction with 14-3-3 protein sigma (SFN), leading to GBP1 retention in the cytosol. Dephosphorylated in response to infection, liberating GBP1.

It localises to the cytoplasmic vesicle membrane. The protein resides in the golgi apparatus membrane. The protein localises to the cell membrane. Its subcellular location is the cytoplasm. It is found in the cytosol. It localises to the secreted. The enzyme catalyses GTP + H2O = GDP + phosphate + H(+). It carries out the reaction GDP + H2O = GMP + phosphate + H(+). Its function is as follows. Interferon (IFN)-inducible GTPase that plays important roles in innate immunity against a diverse range of bacterial, viral and protozoan pathogens. Hydrolyzes GTP to GMP in two consecutive cleavage reactions: GTP is first hydrolyzed to GDP and then to GMP in a processive manner. Following infection, recruited to the pathogen-containing vacuoles or vacuole-escaped bacteria and promotes both inflammasome assembly and autophagy. Acts as a positive regulator of inflammasome assembly by facilitating the detection of inflammasome ligands from pathogens. Involved in the lysis of pathogen-containing vacuoles, releasing pathogens into the cytosol. Following pathogen release in the cytosol, forms a protein coat in a GTPase-dependent manner that encapsulates pathogens and promotes the detection of ligands by pattern recognition receptors. Plays a key role in inflammasome assembly in response to infection by Gram-negative bacteria: following pathogen release in the cytosol, forms a protein coat that encapsulates Gram-negative bacteria and directly binds to lipopolysaccharide (LPS), disrupting the O-antigen barrier and unmasking lipid A that is that detected by the non-canonical inflammasome effector CASP4/CASP11. Also promotes recruitment of proteins that mediate bacterial cytolysis, leading to release double-stranded DNA (dsDNA) that activates the AIM2 inflammasome. Involved in autophagy by regulating bacteriolytic peptide generation via its interaction with ubiquitin-binding protein SQSTM1, which delivers monoubiquitinated proteins to autolysosomes for the generation of bacteriolytic peptides. Confers protection to several pathogens, including the bacterial pathogens L.monocytogenes and M.bovis BCG as well as the protozoan pathogen T.gondii. Exhibits antiviral activity against influenza virus. The sequence is that of Guanylate-binding protein 1 (GBP1) from Chlorocebus aethiops (Green monkey).